The sequence spans 120 residues: Large ribosomal subunit protein uL18 (120 aa).

Belongs to the universal ribosomal protein uL18 family. Part of the 50S ribosomal subunit; part of the 5S rRNA/L5/L18/L25 subcomplex. Contacts the 5S and 23S rRNAs.

This is one of the proteins that bind and probably mediate the attachment of the 5S RNA into the large ribosomal subunit, where it forms part of the central protuberance. In Sinorhizobium medicae (strain WSM419) (Ensifer medicae), this protein is Large ribosomal subunit protein uL18.